Reading from the N-terminus, the 257-residue chain is Snake venom serine protease CL5 (257 aa).

The first 18 residues, 1-18 (MVLIRVLANLLILQLSYA), serve as a signal peptide directing secretion. The propeptide occupies 19 to 24 (QRSSEL). The Peptidase S1 domain maps to 25-248 (VIGGDECNIN…HLDWIQSIIA (224 aa)). Cystine bridges form between C31/C162, C49/C65, C141/C209, C173/C188, and C199/C224. H64 functions as the Charge relay system in the catalytic mechanism. N-linked (GlcNAc...) asparagine glycans are attached at residues N78 and N102. D109 (charge relay system) is an active-site residue. N-linked (GlcNAc...) asparagine glycans are attached at residues N153 and N169. The active-site Charge relay system is the S203. N-linked (GlcNAc...) asparagine glycosylation is present at N250.

This sequence belongs to the peptidase S1 family. Snake venom subfamily. Monomer. As to expression, expressed by the venom gland.

Its subcellular location is the secreted. Functionally, snake venom serine protease that may act in the hemostasis system of the prey. The sequence is that of Snake venom serine protease CL5 from Trimeresurus stejnegeri (Chinese green tree viper).